Reading from the N-terminus, the 318-residue chain is tRNA dimethylallyltransferase (318 aa).

16-23 contacts ATP; that stretch reads GPTASGKS. Position 18 to 23 (18 to 23) interacts with substrate; the sequence is TASGKS. Interaction with substrate tRNA stretches follow at residues 41 to 44 and 165 to 169; these read DSRQ and QRLIR.

It belongs to the IPP transferase family. Monomer. The cofactor is Mg(2+).

The enzyme catalyses adenosine(37) in tRNA + dimethylallyl diphosphate = N(6)-dimethylallyladenosine(37) in tRNA + diphosphate. Functionally, catalyzes the transfer of a dimethylallyl group onto the adenine at position 37 in tRNAs that read codons beginning with uridine, leading to the formation of N6-(dimethylallyl)adenosine (i(6)A). In Pelodictyon phaeoclathratiforme (strain DSM 5477 / BU-1), this protein is tRNA dimethylallyltransferase.